The following is a 222-amino-acid chain: GTP cyclohydrolase 1 (222 aa).

Zn(2+) is bound by residues cysteine 111, histidine 114, and cysteine 182.

The protein belongs to the GTP cyclohydrolase I family. As to quaternary structure, toroid-shaped homodecamer, composed of two pentamers of five dimers.

The catalysed reaction is GTP + H2O = 7,8-dihydroneopterin 3'-triphosphate + formate + H(+). It participates in cofactor biosynthesis; 7,8-dihydroneopterin triphosphate biosynthesis; 7,8-dihydroneopterin triphosphate from GTP: step 1/1. Its activity is regulated as follows. Allosteric enzyme. Activity is modulated by K(+), divalent cations, UTP, and tetrahydrobiopterin. Tetrahydrobiopterin is an inhibitor of this enzyme. The chain is GTP cyclohydrolase 1 from Salmonella typhi.